The sequence spans 519 residues: Keratin, type II cytoskeletal 1b (519 aa).

Residues 1-166 (MSRQFSSQSA…DPEIQKIKTQ (166 aa)) are head. 2 positions are modified to omega-N-methylarginine: R81 and R95. The coil 1A stretch occupies residues 167 to 202 (EREQIKTLNNKFASFIDKVRFLEQQNQVLQTKWELL). The IF rod domain occupies 167–480 (EREQIKTLNN…ELLEGEESRM (314 aa)). Residues 203–221 (QQVNTSTRTSSLEPIFEEF) are linker 1. The coil 1B stretch occupies residues 222-313 (INQLQRQVDV…YLFDTELSQI (92 aa)). The linker 12 stretch occupies residues 314-337 (QTHVSDTNVILSMDNNRSLDLDSI). A coil 2 region spans residues 338–476 (INAVRTQYEL…ATYRELLEGE (139 aa)). The tract at residues 477–519 (ESRMSGALQSQVSIWALPSNEGNDLGERLHDPQSQVPVPKLGC) is tail. The disordered stretch occupies residues 499-519 (NDLGERLHDPQSQVPVPKLGC).

It belongs to the intermediate filament family. Post-translationally, undergoes deimination of some arginine residues (citrullination).

The sequence is that of Keratin, type II cytoskeletal 1b (Krt77) from Rattus norvegicus (Rat).